Reading from the N-terminus, the 341-residue chain is Arfaptin-2 (341 aa).

The tract at residues 46–85 (NETSIVSGGYGGSGDGLIPTGSGRHPSHSTTPSGPGDEVA) is disordered. Serine 72 is subject to Phosphoserine. Threonine 76 carries the phosphothreonine modification. Positions 121 to 321 (TVDLELELQI…NQKQLEQTLQ (201 aa)) constitute an AH domain.

Forms homodimers or heterodimers with ARFIP1. Interacts with RAC1. Specifically binds to GTP-bound ARF1 and ARF6, but binds to RAC1.GTP and RAC1.GDP with similar affinities. Interacts with ARL1. Interacts (via N-terminus) with IKBKB and IKBKG; these interactions inhibit activation of NF-kappa-B.

The protein localises to the golgi apparatus. It localises to the trans-Golgi network membrane. Functionally, plays a role in constitutive metalloproteinase (MMP) secretion from the trans Golgi network. May have important functions during vesicle biogenesis at certain cargo subdomains, which could be predominantly utilized by secreted MMPs, such as MMP7 and MMP2. Also involved in autophagy by regulating the starvation-dependent trafficking of ATG9A vesicles which deliver the phosphatidylinositol 4-kinase beta (PI4KB) to the autophagosome initiation site. Involved in phagophore growth during mitophagy by regulating ATG9A trafficking to mitochondria. In addition, plays a role in NF-kappa-B inhibition by interacting with IKBKB and IKBKG. This is Arfaptin-2 from Homo sapiens (Human).